We begin with the raw amino-acid sequence, 154 residues long: Crossover junction endodeoxyribonuclease RuvC (154 aa).

Catalysis depends on residues D7, E67, and D139. 3 residues coordinate Mg(2+): D7, E67, and D139.

This sequence belongs to the RuvC family. Homodimer which binds Holliday junction (HJ) DNA. The HJ becomes 2-fold symmetrical on binding to RuvC with unstacked arms; it has a different conformation from HJ DNA in complex with RuvA. In the full resolvosome a probable DNA-RuvA(4)-RuvB(12)-RuvC(2) complex forms which resolves the HJ. Requires Mg(2+) as cofactor.

Its subcellular location is the cytoplasm. It catalyses the reaction Endonucleolytic cleavage at a junction such as a reciprocal single-stranded crossover between two homologous DNA duplexes (Holliday junction).. In terms of biological role, the RuvA-RuvB-RuvC complex processes Holliday junction (HJ) DNA during genetic recombination and DNA repair. Endonuclease that resolves HJ intermediates. Cleaves cruciform DNA by making single-stranded nicks across the HJ at symmetrical positions within the homologous arms, yielding a 5'-phosphate and a 3'-hydroxyl group; requires a central core of homology in the junction. The consensus cleavage sequence is 5'-(A/T)TT(C/G)-3'. Cleavage occurs on the 3'-side of the TT dinucleotide at the point of strand exchange. HJ branch migration catalyzed by RuvA-RuvB allows RuvC to scan DNA until it finds its consensus sequence, where it cleaves and resolves the cruciform DNA. The protein is Crossover junction endodeoxyribonuclease RuvC of Synechococcus sp. (strain CC9902).